We begin with the raw amino-acid sequence, 778 residues long: uncharacterized protein (778 aa).

Polar residues-rich tracts occupy residues 1–11, 18–34, and 41–51; these read MPISSPGTRCS, TLQQYSAESVSTEQSLG, and GSITENYVQDS. Residues 1–60 are disordered; the sequence is MPISSPGTRCSSDLKDPTLQQYSAESVSTEQSLGTFEESKGSITENYVQDSSVDEHDDGN. Helical transmembrane passes span 356–381 and 401–423; these read YILMGLAGIGGGLVIGLSSGLLAPII and GFLAGGGSAALITAGGAISGAHI.

This sequence belongs to the TMCO4 family.

The protein localises to the golgi apparatus membrane. This is an uncharacterized protein from Schizosaccharomyces pombe (strain 972 / ATCC 24843) (Fission yeast).